The sequence spans 522 residues: Putative ribose/galactose/methyl galactoside import ATP-binding protein (522 aa).

2 ABC transporter domains span residues 7-244 (LEMV…VGRE) and 254-498 (PKLG…TGQA). Position 39–46 (39–46 (GENGAGKS)) interacts with ATP.

This sequence belongs to the ABC transporter superfamily. Carbohydrate importer 2 (CUT2) (TC 3.A.1.2) family.

It is found in the cell membrane. The catalysed reaction is D-ribose(out) + ATP + H2O = D-ribose(in) + ADP + phosphate + H(+). It catalyses the reaction D-galactose(out) + ATP + H2O = D-galactose(in) + ADP + phosphate + H(+). Functionally, part of an ABC transporter complex involved in carbohydrate import. Could be involved in ribose, galactose and/or methyl galactoside import. Responsible for energy coupling to the transport system. The polypeptide is Putative ribose/galactose/methyl galactoside import ATP-binding protein (Halalkalibacterium halodurans (strain ATCC BAA-125 / DSM 18197 / FERM 7344 / JCM 9153 / C-125) (Bacillus halodurans)).